We begin with the raw amino-acid sequence, 728 residues long: Catalase-peroxidase 1 (728 aa).

The N-terminal stretch at 1–22 (MDKTQSSQGKCPVMHGANSAVA) is a signal peptide. Residues 97–225 (WHSAGTYRVA…LAAVMMGLIY (129 aa)) constitute a cross-link (tryptophyl-tyrosyl-methioninium (Trp-Tyr) (with M-251)). Catalysis depends on histidine 98, which acts as the Proton acceptor. The segment at residues 225–251 (YVNPEGVDGKPDPLRTAQDVRVTFARM) is a cross-link (tryptophyl-tyrosyl-methioninium (Tyr-Met) (with W-97)). Heme b is bound at residue histidine 266.

It belongs to the peroxidase family. Peroxidase/catalase subfamily. Homodimer or homotetramer. The cofactor is heme b. Post-translationally, formation of the three residue Trp-Tyr-Met cross-link is important for the catalase, but not the peroxidase activity of the enzyme.

The catalysed reaction is H2O2 + AH2 = A + 2 H2O. It catalyses the reaction 2 H2O2 = O2 + 2 H2O. In terms of biological role, bifunctional enzyme with both catalase and broad-spectrum peroxidase activity. The chain is Catalase-peroxidase 1 from Shewanella sp. (strain ANA-3).